Here is a 524-residue protein sequence, read N- to C-terminus: MGKSFLDCESLIALQEIATNPVDLTLPGTLSQDRIQQYALSAEGFTYSYATERVDDRSLNALRMLAEERELIKQMESMQQGAVMNYIEGFQSESRSVLHTATRAWVRDHDLKDEAASIANHSEREAHRLAEFLYAARSKFSTLVQIGIGGSELGPKAMYFAMQGICPSDKRIFFVSNIDPDNAAEVLKEVDLKQTLIVVVSKSGTTLEPSVNEELFKRAYQDKGLSVADHFVAVTAEGSPMDDKTHYLEVFHLWDSVGGRFSATSMVGGVVLGFAFGYEVFFEFLQGAASMDAHALTPIMEKNLPLLSAMLGIWNRNVLKYPTTAVIPYATGLKYFTAHLQQCGMESNGKSISRQGKEVHFATSPIIWGDVGTNCQHSFFQSLHQGTDIVPVEFIGFLQNQRGIDCVLSGSSSSQKLFANLVAQSLALAQGRDNDNPNKRFKGNRPSSILVAQQLSPRIAGGLLAFYEHKFAFQGFCWGINSFDQEGVSLGKELATQIIGLMSGAAPIEFPEARELLRLFNVLQ.

Glu-346 acts as the Proton donor in catalysis. Active-site residues include His-377 and Lys-492.

The protein belongs to the GPI family.

It is found in the cytoplasm. The catalysed reaction is alpha-D-glucose 6-phosphate = beta-D-fructose 6-phosphate. It functions in the pathway carbohydrate biosynthesis; gluconeogenesis. Its pathway is carbohydrate degradation; glycolysis; D-glyceraldehyde 3-phosphate and glycerone phosphate from D-glucose: step 2/4. Functionally, catalyzes the reversible isomerization of glucose-6-phosphate to fructose-6-phosphate. This Chlamydia muridarum (strain MoPn / Nigg) protein is Glucose-6-phosphate isomerase.